The chain runs to 249 residues: Phosphate import ATP-binding protein PstB 2 (249 aa).

The region spanning 4-244 is the ABC transporter domain; sequence FDIENLDLYY…PSDDRTRGYV (241 aa). 36 to 43 contacts ATP; that stretch reads GPSGCGKS.

It belongs to the ABC transporter superfamily. Phosphate importer (TC 3.A.1.7) family. The complex is composed of two ATP-binding proteins (PstB), two transmembrane proteins (PstC and PstA) and a solute-binding protein (PstS).

It localises to the cell inner membrane. It carries out the reaction phosphate(out) + ATP + H2O = ADP + 2 phosphate(in) + H(+). Part of the ABC transporter complex PstSACB involved in phosphate import. Responsible for energy coupling to the transport system. This Vibrio vulnificus (strain CMCP6) protein is Phosphate import ATP-binding protein PstB 2.